The sequence spans 1494 residues: MIFSQGSSPIKGDFSKIKFSIASPESILAHSRGEVLKPETINYRTFKPERDGLMCEKIFGPTKDWECYCGKYKRVRYKGIICDRCGVEVTTKNVRRERMGHISLAVPVVHTWFFRSVPSKIGALLDLSTKELERIIYYEVYVVINPGEPGEKQGIKKFDRLTEEQYFQIITEYEDNQDLEDNDPAKFVAKMGGEAIHTLLKGLNLDEIAVNLRKVLKESGSEQKRADALKRLKVVESFRKSYEPQKRTRKKSTGLFPEEDSPELYIYEGNKPEYMVMEVVPVIPPELRPLVPLEGGRFATSDLNDLYRRVIIRNNRLKKLIDIRAPEVILRNEKRMLQEAVDALFDNSRKANAVKTGESNRPLKSLSDALKGKQGRFRQNLLGKRVDYSGRSVIVVGPELQLHQCGLPKSMAIELFQPFVIRRLVERGIAKSVKSAKKLIDKKDPVVWDVLEKVIDGRPVLLNRAPTLHRLGIQAFQPTLIEGKAIQLHPLVCTAFNADFDGDQMAVHVPLSQEAQLEASLLMLSSHNLILPQSGKPVTVPSQDMVLGMYYLTKARFGDVGQGQLFYSMEEVIIAYNEERAGLHAQIFVKYDGKVDQVSDPVRLVDTLVPEEQAERRAWLKSQIEQKKVLVTTVGRVIFNQHMPEKIGFINKLINKKVAKELIAHLSSQVGNVETAQFLDNIKAVGFGYAMRGGLSIGLSDAIVPETKVKHIKNAQRDSAKVVKEYNRGTLTDNERYNQIVDVWQKTSNLVADESYQKLKNDRDGFNPLYMMLDSGARGSREQVRQLTGMRGLIARPQKSMSGQPGEIIENPIISNLKEGLTVLEYFISTHGARKGLSDTSLKTADAGYLTRRLHDVAQDVIVTIDDCGTTRGLHVERNIEEETSGQIKFREKIKGRVAARDIVDVINDKVVVKAGEIITDELAAAIQDNIGVEEAEIRSVLTCESKVGICSKCYGTNLSVHKLVEMGEAVGVIAAQSIGEPGTQLTLRTFHQGGAAQGGISETETKAFYEGQVELEDVKSVEHSIITEDGIEETRQIVIQKNGKLNIIDPDSGKVLKRYVVPHGAHINVENGQMVRKDQVLFSSEPNSTQILAEMPGFAKFIDIEKGVTYKEEVDPQTGFAQHTIINWRSKLRASETREPRIAIVSESGEIKKTYPVPIKSNLYVEDGQKLNPGDTIAKVPRNLDRVGGDITAGLPKVTELFEARIPTDPAIVSEIDGYVSFGSQRRSSKEIKVKNDFGEEKTYYVQVGKHVLATEGDEVKAGDPLTDGAVSPQDILRIQGPNAVQQYLVNEIQKVYQINAGVEINDKHLEVIVRQMLQKVRVEEAGDTNLLPGDLIDRGTFIEANEAVAEKVRVIDRGDAPPRIQEGQLYKQRDITKLNRELRRNSKSLITIEPALQATSHPVLLGITSAALQTESVISAASFQETTKVLTDAAVAGKVDHLAGLKENVIVGKLIPAGTGLRKYRSIRLQSNEPEEVDVIESASTGDAEEEN.

4 residues coordinate Zn(2+): C67, C69, C82, and C85. D499, D501, and D503 together coordinate Mg(2+). Zn(2+) is bound by residues C868, C944, C951, and C954.

This sequence belongs to the RNA polymerase beta' chain family. As to quaternary structure, the RNAP catalytic core consists of 2 alpha, 1 beta, 1 beta' and 1 omega subunit. When a sigma factor is associated with the core the holoenzyme is formed, which can initiate transcription. Mg(2+) serves as cofactor. Zn(2+) is required as a cofactor.

The catalysed reaction is RNA(n) + a ribonucleoside 5'-triphosphate = RNA(n+1) + diphosphate. DNA-dependent RNA polymerase catalyzes the transcription of DNA into RNA using the four ribonucleoside triphosphates as substrates. The sequence is that of DNA-directed RNA polymerase subunit beta' from Chlorobaculum parvum (strain DSM 263 / NCIMB 8327) (Chlorobium vibrioforme subsp. thiosulfatophilum).